A 68-amino-acid polypeptide reads, in one-letter code: Suppressor of RNA silencing (68 aa).

The chain crosses the membrane as a helical span at residues 23–43 (LLTMSGAYVNVCVCIVFFILV).

Belongs to the virgaviridae suppressor of RNA silencing family.

It is found in the host endoplasmic reticulum membrane. Suppressor of RNA-mediated gene silencing, also known as post-transcriptional gene silencing (PTGS), a mechanism of plant viral defense that performs sequence-specific inhibition of viral mRNAs expression. The RNA silencing suppression activity is variable depending on the origin of the isolate. This is Suppressor of RNA silencing (8K protein) from Solanum nigrum (Black nightshade).